Here is a 358-residue protein sequence, read N- to C-terminus: DNA polymerase IV (358 aa).

The region spanning 4–185 (IIHIDMDCYF…LPLIKIPGVG (182 aa)) is the UmuC domain. Positions 8 and 103 each coordinate Mg(2+). Residue E104 is part of the active site.

Belongs to the DNA polymerase type-Y family. Monomer. Requires Mg(2+) as cofactor.

The protein resides in the cytoplasm. It carries out the reaction DNA(n) + a 2'-deoxyribonucleoside 5'-triphosphate = DNA(n+1) + diphosphate. Poorly processive, error-prone DNA polymerase involved in untargeted mutagenesis. Copies undamaged DNA at stalled replication forks, which arise in vivo from mismatched or misaligned primer ends. These misaligned primers can be extended by PolIV. Exhibits no 3'-5' exonuclease (proofreading) activity. May be involved in translesional synthesis, in conjunction with the beta clamp from PolIII. This Shewanella denitrificans (strain OS217 / ATCC BAA-1090 / DSM 15013) protein is DNA polymerase IV.